The sequence spans 370 residues: DNA replication and repair protein RecF (370 aa).

ATP is bound at residue 30-37 (GQNGMGKT).

Belongs to the RecF family.

It localises to the cytoplasm. Its function is as follows. The RecF protein is involved in DNA metabolism; it is required for DNA replication and normal SOS inducibility. RecF binds preferentially to single-stranded, linear DNA. It also seems to bind ATP. The chain is DNA replication and repair protein RecF from Bacteroides fragilis (strain ATCC 25285 / DSM 2151 / CCUG 4856 / JCM 11019 / LMG 10263 / NCTC 9343 / Onslow / VPI 2553 / EN-2).